The sequence spans 359 residues: DNA integrity scanning protein DisA (359 aa).

One can recognise a DAC domain in the interval 7 to 145 (DDIFRATLAA…AGRRYVLDGA (139 aa)). ATP contacts are provided by residues Gly74, Leu92, and 105–109 (TRHRT).

Belongs to the DisA family. Homooctamer. It depends on Mg(2+) as a cofactor.

It carries out the reaction 2 ATP = 3',3'-c-di-AMP + 2 diphosphate. In terms of biological role, participates in a DNA-damage check-point that is active prior to asymmetric division when DNA is damaged. DisA forms globular foci that rapidly scan along the chromosomes during sporulation, searching for lesions. When a lesion is present, DisA pauses at the lesion site. This triggers a cellular response that culminates in a temporary block in sporulation initiation. Its function is as follows. Also has diadenylate cyclase activity, catalyzing the condensation of 2 ATP molecules into cyclic di-AMP (c-di-AMP). c-di-AMP acts as a signaling molecule that couples DNA integrity with progression of sporulation. The rise in c-di-AMP level generated by DisA while scanning the chromosome, operates as a positive signal that advances sporulation; upon encountering a lesion, the DisA focus arrests at the damaged site and halts c-di-AMP synthesis. This chain is DNA integrity scanning protein DisA, found in Parafrankia sp. (strain EAN1pec).